Consider the following 151-residue polypeptide: NADH-quinone oxidoreductase subunit I 2 (151 aa).

4Fe-4S ferredoxin-type domains are found at residues 49 to 82 (PRLNINPDNGETLCISCNLCALACPENLIVVTSE) and 93 to 122 (VTFTYDTSRCMFCGLCEDACPVDALELTQD). Residues cysteine 62, cysteine 65, cysteine 68, cysteine 72, cysteine 102, cysteine 105, cysteine 108, and cysteine 112 each contribute to the [4Fe-4S] cluster site.

Belongs to the complex I 23 kDa subunit family. In terms of assembly, NDH-1 is composed of 14 different subunits. Subunits NuoA, H, J, K, L, M, N constitute the membrane sector of the complex. [4Fe-4S] cluster is required as a cofactor.

It is found in the cell inner membrane. It catalyses the reaction a quinone + NADH + 5 H(+)(in) = a quinol + NAD(+) + 4 H(+)(out). In terms of biological role, NDH-1 shuttles electrons from NADH, via FMN and iron-sulfur (Fe-S) centers, to quinones in the respiratory chain. The immediate electron acceptor for the enzyme in this species is believed to be ubiquinone. Couples the redox reaction to proton translocation (for every two electrons transferred, four hydrogen ions are translocated across the cytoplasmic membrane), and thus conserves the redox energy in a proton gradient. The polypeptide is NADH-quinone oxidoreductase subunit I 2 (Solibacter usitatus (strain Ellin6076)).